The following is a 219-amino-acid chain: MSMECVVQGIIETQHVEALEILLQGLCGVQRERLRVHELCLRSGPNLGVVSSEVRLLCDLDQPEPTWTVKHVGGAMRGAGADQISVLVRNMIESKVSKNALRMFYALGYKLDHELLKVGFAFHFQRTAHISVSVSSVNKMPKVHAIDEAVPVTPGMQIVDVTAPATSENYSEVAAAVSSFCEFLAPLVHLSKPSISTGVVPTAAAAAASLMSDGGGTTL.

The protein belongs to the Mediator complex subunit 18 family. In terms of assembly, component of the Mediator complex. Interacts with YY1 to suppress disease susceptibility via the repression of genes glutaredoxins GRX480, GRXS13 and thioredoxin TRX-h5. Binds to ABI4 to regulate abscisic acid responses; recruited by ABI4 to ABI5 promoter in the presence of abscisic acid (ABA). Interacts with SUF4 to regulate flowering time; recruited by SUF4 to FLC promoter.

The protein localises to the nucleus. Its function is as follows. Component of the Mediator complex, a coactivator involved in the regulated transcription of nearly all RNA polymerase II-dependent genes. Mediator functions as a bridge to convey information from gene-specific regulatory proteins to the basal RNA polymerase II transcription machinery. The Mediator complex, having a compact conformation in its free form, is recruited to promoters by direct interactions with regulatory proteins and serves for the assembly of a functional pre-initiation complex with RNA polymerase II and the general transcription factors. Involved in the regulation of histone H3 lysine tri-methylation (H3K36me3). Associates with the promoter, coding and terminator regions of target genes suggesting its function in transcription initiation, elongation and termination. Multifunctional protein which regulates plant immunity, especially during necrotrophic fungal infection (e.g. B.cinerea and A.brassicicola), flowering time and responses to hormones (e.g. abscisic acid ABA and ethylene) through interactions with distinct transcription factors. This chain is Mediator of RNA polymerase II transcription subunit 18, found in Arabidopsis thaliana (Mouse-ear cress).